We begin with the raw amino-acid sequence, 659 residues long: Tetratricopeptide repeat protein 30 homolog (659 aa).

TPR repeat units lie at residues 3-36 (SQNM…LNGI), 43-76 (RAGL…VPDV), 143-176 (ATVK…GGFN), 178-210 (HIAY…GIRN), 391-424 (CRSA…RAWI), 450-483 (TWRL…NYDD), and 533-566 (CIVN…GSGA).

Belongs to the TTC30/dfy-1/fleer family.

The protein localises to the cell projection. Its subcellular location is the cilium. Required for polyglutamylation of axonemal tubulin in sensory cilia. Plays a role in anterograde intraflagellar transport (IFT), the process by which cilia precursors are transported from the base of the cilium to the site of their incorporation at the tip. The sequence is that of Tetratricopeptide repeat protein 30 homolog from Aedes aegypti (Yellowfever mosquito).